The chain runs to 585 residues: Serine/threonine-protein kinase Nek3 (585 aa).

A Protein kinase domain is found at 4–258; it reads YEVLEQIGKG…AAELLKHPHL (255 aa). ATP is bound by residues 10 to 18 and lysine 33; that span reads IGKGSFGSA. Aspartate 129 functions as the Proton acceptor in the catalytic mechanism. 2 disordered regions span residues 354 to 413 and 489 to 511; these read GNHS…TPVN and DSSK…SNPL. Polar residues-rich tracts occupy residues 400-413 and 498-511; these read RASQ…TPVN and SSDP…SNPL.

It belongs to the protein kinase superfamily. NEK Ser/Thr protein kinase family. NIMA subfamily. As to quaternary structure, interacts with PLIM2B. Expressed in pollen grains.

It catalyses the reaction L-seryl-[protein] + ATP = O-phospho-L-seryl-[protein] + ADP + H(+). The enzyme catalyses L-threonyl-[protein] + ATP = O-phospho-L-threonyl-[protein] + ADP + H(+). In terms of biological role, may be involved in plant development processes. May function downstream of DCW11 in retrograde signaling from the mitochondria to the nucleus. Seems to be involved in the mechanism of cytoplasmic male sterility (CMS) occurrence. This chain is Serine/threonine-protein kinase Nek3, found in Oryza sativa subsp. japonica (Rice).